The chain runs to 1462 residues: Iron-sulfur cluster assembly protein SufD (1462 aa).

Disordered regions lie at residues 500-525 (IDNN…DNPY), 938-970 (NQNK…GTEQ), and 1111-1153 (NIPS…EKEE). Residues 510-523 (NNNNNNNNNNNCDN) show a composition bias toward low complexity. A compositionally biased stretch (basic and acidic residues) spans 961-970 (HIQDEQGTEQ). Positions 1111 to 1136 (NIPSNNKQTNSNNNSEYNNEQNNCSN) are enriched in low complexity.

It belongs to the iron-sulfur cluster assembly SufBD family. Component of a complex composed of SufB, SufC and SufD in a stoichiometric ratio of 1:2:1. Interacts with SufB. Interacts with SufC; the interaction enhances the ATPase activity of SufC. Post-translationally, proteolytically cleaved.

It is found in the plastid. The protein localises to the apicoplast. It functions in the pathway cofactor biosynthesis; iron-sulfur cluster biosynthesis. Its function is as follows. Participates in the sulfur mobilization (SUF) pathway for iron-sulfur (Fe-S) cluster biogenesis. As part of a complex consisting of SufB-SufC(2)-SufD, involved in assembly of [4Fe-4S] clusters. Enhances the ATPase activity of SufC. The polypeptide is Iron-sulfur cluster assembly protein SufD (Plasmodium falciparum (isolate 3D7)).